The chain runs to 126 residues: DNA-directed RNA polymerase 35 kDa subunit (126 aa).

It belongs to the poxviridae DNA-directed RNA polymerase 35 kDa subunit family. The DNA-dependent RNA polymerase used for intermediate and late genes expression consists of eight subunits 147 kDa, 133 kDa, 35 kDa, 30 kDa, 22 kDa, 19 kDa, 18 kDa and 7 kDa totalling more than 500 kDa in mass. The same holoenzyme, with the addition of the transcription-specificity factor RAP94, is used for early gene expression.

The protein localises to the virion. It carries out the reaction RNA(n) + a ribonucleoside 5'-triphosphate = RNA(n+1) + diphosphate. In terms of biological role, part of the DNA-dependent RNA polymerase which catalyzes the transcription of viral DNA into RNA using the four ribonucleoside triphosphates as substrates. Responsible for the transcription of early, intermediate and late genes. DNA-dependent RNA polymerase associates with the early transcription factor (ETF) thereby allowing the early genes transcription. Late transcription, and probably also intermediate transcription, require newly synthesized RNA polymerase. The protein is DNA-directed RNA polymerase 35 kDa subunit (RPO35) of Ovis aries (Sheep).